The primary structure comprises 211 residues: RNA chaperone ProQ (211 aa).

Residues 113 to 147 are disordered; sequence RRAVEKANNPKANKKRSVYHSGNKSENKKSAGKKF.

This sequence belongs to the ProQ family.

It is found in the cytoplasm. Functionally, RNA chaperone with significant RNA binding, RNA strand exchange and RNA duplexing activities. The sequence is that of RNA chaperone ProQ from Histophilus somni (strain 129Pt) (Haemophilus somnus).